Reading from the N-terminus, the 25-residue chain is Hemocyanin subunit 2 (25 aa).

The protein belongs to the tyrosinase family. Hemocyanin subfamily. As to expression, hemolymph.

Its subcellular location is the secreted. The protein localises to the extracellular space. Its function is as follows. Hemocyanins are copper-containing oxygen carriers occurring freely dissolved in the hemolymph of many mollusks and arthropods. The chain is Hemocyanin subunit 2 from Carcinus maenas (Common shore crab).